Reading from the N-terminus, the 361-residue chain is UDP-N-acetylglucosamine--N-acetylmuramyl-(pentapeptide) pyrophosphoryl-undecaprenol N-acetylglucosamine transferase (361 aa).

UDP-N-acetyl-alpha-D-glucosamine-binding positions include 11–13 (TGG), N124, R164, S192, and Q295.

Belongs to the glycosyltransferase 28 family. MurG subfamily.

The protein resides in the cell membrane. The catalysed reaction is di-trans,octa-cis-undecaprenyl diphospho-N-acetyl-alpha-D-muramoyl-L-alanyl-D-glutamyl-meso-2,6-diaminopimeloyl-D-alanyl-D-alanine + UDP-N-acetyl-alpha-D-glucosamine = di-trans,octa-cis-undecaprenyl diphospho-[N-acetyl-alpha-D-glucosaminyl-(1-&gt;4)]-N-acetyl-alpha-D-muramoyl-L-alanyl-D-glutamyl-meso-2,6-diaminopimeloyl-D-alanyl-D-alanine + UDP + H(+). Its pathway is cell wall biogenesis; peptidoglycan biosynthesis. Cell wall formation. Catalyzes the transfer of a GlcNAc subunit on undecaprenyl-pyrophosphoryl-MurNAc-pentapeptide (lipid intermediate I) to form undecaprenyl-pyrophosphoryl-MurNAc-(pentapeptide)GlcNAc (lipid intermediate II). In Deinococcus geothermalis (strain DSM 11300 / CIP 105573 / AG-3a), this protein is UDP-N-acetylglucosamine--N-acetylmuramyl-(pentapeptide) pyrophosphoryl-undecaprenol N-acetylglucosamine transferase.